Consider the following 199-residue polypeptide: Small ribosomal subunit protein eS1 (199 aa).

This sequence belongs to the eukaryotic ribosomal protein eS1 family.

In Pyrococcus horikoshii (strain ATCC 700860 / DSM 12428 / JCM 9974 / NBRC 100139 / OT-3), this protein is Small ribosomal subunit protein eS1.